A 1234-amino-acid chain; its full sequence is Transcription-repair-coupling factor (1234 aa).

The Helicase ATP-binding domain occupies 663-824; sequence DMEKPIPMDR…LAGIREMSTI (162 aa). 676–683 serves as a coordination point for ATP; it reads GDVGYGKT. Residues 777–780 carry the DEEQ box motif; it reads DEEQ. Residues 842 to 999 enclose the Helicase C-terminal domain; the sequence is DDKQIAAALR…GMAVALKDLE (158 aa). Residues 1207–1234 are disordered; that stretch reads RQHIGITNPSPPGEDGRGRNTTIKERQP. Positions 1220–1234 are enriched in basic and acidic residues; it reads EDGRGRNTTIKERQP.

This sequence in the N-terminal section; belongs to the UvrB family. The protein in the C-terminal section; belongs to the helicase family. RecG subfamily.

It is found in the cytoplasm. Functionally, couples transcription and DNA repair by recognizing RNA polymerase (RNAP) stalled at DNA lesions. Mediates ATP-dependent release of RNAP and its truncated transcript from the DNA, and recruitment of nucleotide excision repair machinery to the damaged site. This chain is Transcription-repair-coupling factor, found in Mycobacterium bovis (strain ATCC BAA-935 / AF2122/97).